The sequence spans 279 residues: Energy-coupling factor transporter ATP-binding protein EcfA2 (279 aa).

Residues 3–245 (ITLKNVSYTY…LDFMESIQLG (243 aa)) enclose the ABC transporter domain. ATP is bound at residue 40 to 47 (GHTGSGKS).

This sequence belongs to the ABC transporter superfamily. Energy-coupling factor EcfA family. As to quaternary structure, forms a stable energy-coupling factor (ECF) transporter complex composed of 2 membrane-embedded substrate-binding proteins (S component), 2 ATP-binding proteins (A component) and 2 transmembrane proteins (T component).

The protein resides in the cell membrane. ATP-binding (A) component of a common energy-coupling factor (ECF) ABC-transporter complex. Unlike classic ABC transporters this ECF transporter provides the energy necessary to transport a number of different substrates. The polypeptide is Energy-coupling factor transporter ATP-binding protein EcfA2 (Streptococcus sanguinis (strain SK36)).